A 320-amino-acid chain; its full sequence is Cytochrome f (320 aa).

A signal peptide spans 1 to 35 (MQTRNTFSWIREEITRSISVSLMIYIITWASISSA). Heme is bound by residues Y36, C56, C59, and H60. Residues 286–306 (VQGLLFFLGSVVLAQIFLVLK) traverse the membrane as a helical segment.

It belongs to the cytochrome f family. In terms of assembly, the 4 large subunits of the cytochrome b6-f complex are cytochrome b6, subunit IV (17 kDa polypeptide, petD), cytochrome f and the Rieske protein, while the 4 small subunits are PetG, PetL, PetM and PetN. The complex functions as a dimer. Heme serves as cofactor.

The protein resides in the plastid. Its subcellular location is the chloroplast thylakoid membrane. In terms of biological role, component of the cytochrome b6-f complex, which mediates electron transfer between photosystem II (PSII) and photosystem I (PSI), cyclic electron flow around PSI, and state transitions. In Lepidium virginicum (Virginia pepperweed), this protein is Cytochrome f.